A 386-amino-acid chain; its full sequence is Ethanolamine kinase 2 (386 aa).

Belongs to the choline/ethanolamine kinase family. As to expression, expressed in kidney, liver, ovary, testis and prostate.

The catalysed reaction is ethanolamine + ATP = phosphoethanolamine + ADP + H(+). Its pathway is phospholipid metabolism; phosphatidylethanolamine biosynthesis; phosphatidylethanolamine from ethanolamine: step 1/3. In terms of biological role, highly specific for ethanolamine phosphorylation. Does not have choline kinase activity. The protein is Ethanolamine kinase 2 (ETNK2) of Homo sapiens (Human).